A 422-amino-acid chain; its full sequence is 5'-deoxyadenosine deaminase (422 aa).

Zn(2+) is bound by residues His-57 and His-59. Glu-86 and His-178 together coordinate substrate. His-205 is a Zn(2+) binding site. Residues Glu-208 and Asp-294 each contribute to the substrate site. Asp-294 lines the Zn(2+) pocket.

It belongs to the metallo-dependent hydrolases superfamily. MTA/SAH deaminase family. Homotetramer. It depends on Zn(2+) as a cofactor.

It carries out the reaction 5'-deoxyadenosine + H2O + H(+) = 5'-deoxyinosine + NH4(+). It catalyses the reaction S-adenosyl-L-homocysteine + H2O + H(+) = S-inosyl-L-homocysteine + NH4(+). The catalysed reaction is S-methyl-5'-thioadenosine + H2O + H(+) = S-methyl-5'-thioinosine + NH4(+). The enzyme catalyses adenosine + H2O + H(+) = inosine + NH4(+). The protein operates within amino-acid biosynthesis; S-adenosyl-L-methionine biosynthesis. Its function is as follows. Catalyzes the deamination of three SAM-derived enzymatic products, namely 5'-deoxyadenosine, S-adenosyl-L-homocysteine, and 5'-methylthioadenosine, to produce the inosine analogs. Can also deaminate adenosine. The preferred substrate for this enzyme is 5'-deoxyadenosine, but all these substrates are efficiently deaminated. Likely functions in a S-adenosyl-L-methionine (SAM) recycling pathway from S-adenosyl-L-homocysteine (SAH) produced from SAM-dependent methylation reactions. May also be involved in the recycling of 5'-deoxyadenosine, whereupon the 5'-deoxyribose moiety of 5'-deoxyinosine is further metabolized to deoxyhexoses used for the biosynthesis of aromatic amino acids in methanogens. This Methanococcus maripaludis (strain DSM 14266 / JCM 13030 / NBRC 101832 / S2 / LL) protein is 5'-deoxyadenosine deaminase.